The following is an 837-amino-acid chain: Periplasmic nitrate reductase (837 aa).

Positions 1-33 (MTTPKLDRRQVLKLEAAAMAALAGGIAMPAAAA) form a signal peptide, tat-type signal. Residues 44–100 (LKWDKAACRFCGTGCSVMVATKENRVVATHGDTKSEVNRGLNCVKGYFLSKIMYGHD) form the 4Fe-4S Mo/W bis-MGD-type domain. 4 residues coordinate [4Fe-4S] cluster: cysteine 51, cysteine 54, cysteine 58, and cysteine 86. Residues lysine 88, glutamine 155, asparagine 180, cysteine 184, 217–224 (WGSNMAEM), 248–252 (STFEH), 267–269 (QTD), methionine 378, glutamine 382, asparagine 488, 514–515 (SD), lysine 537, aspartate 564, and 724–733 (TGRVLEHWHS) contribute to the Mo-bis(molybdopterin guanine dinucleotide) site. Residue tryptophan 800 coordinates substrate. Mo-bis(molybdopterin guanine dinucleotide) is bound by residues asparagine 808 and lysine 825.

Belongs to the prokaryotic molybdopterin-containing oxidoreductase family. NasA/NapA/NarB subfamily. As to quaternary structure, component of the periplasmic nitrate reductase NapAB complex composed of NapA and NapB. [4Fe-4S] cluster serves as cofactor. Requires Mo-bis(molybdopterin guanine dinucleotide) as cofactor. Post-translationally, predicted to be exported by the Tat system. The position of the signal peptide cleavage has not been experimentally proven.

Its subcellular location is the periplasm. The enzyme catalyses 2 Fe(II)-[cytochrome] + nitrate + 2 H(+) = 2 Fe(III)-[cytochrome] + nitrite + H2O. Functionally, catalytic subunit of the periplasmic nitrate reductase complex NapAB. Receives electrons from NapB and catalyzes the reduction of nitrate to nitrite. The protein is Periplasmic nitrate reductase of Rhodopseudomonas palustris (strain BisB18).